A 298-amino-acid chain; its full sequence is Cholesterol 25-hydroxylase (298 aa).

N-linked (GlcNAc...) asparagine glycosylation is present at N5. Transmembrane regions (helical) follow at residues 38-58 (IFPVTFSIITYVGFCLPFVVL), 88-108 (LGLTLYQHLVFVFPVTLLHWV), and 124-144 (LLSHVLICLLLFDTEIFAWHL). Residues 128-263 (VLICLLLFDT…FTHWDKMLGT (136 aa)) form the Fatty acid hydroxylase domain. Residues 142-146 (WHLLH) carry the Histidine box-1 motif. Residues 157-161 (HKVHH) carry the Histidine box-2 motif. N163 carries N-linked (GlcNAc...) asparagine glycosylation. The Histidine box-3 signature appears at 238-244 (HHDMHHS).

This sequence belongs to the sterol desaturase family. Requires Fe cation as cofactor. Post-translationally, N-glycosylated. In terms of tissue distribution, widely expressed at low level and at higher level in the lung. Weakly expressed in the heart, lung and kidney.

The protein resides in the endoplasmic reticulum membrane. It catalyses the reaction cholesterol + AH2 + O2 = 25-hydroxycholesterol + A + H2O. It carries out the reaction cholesterol + NADPH + O2 + H(+) = 25-hydroxycholesterol + NADP(+) + H2O. Functionally, catalyzes the formation of 25-hydroxycholesterol from cholesterol, leading to repress cholesterol biosynthetic enzymes. Plays a key role in cell positioning and movement in lymphoid tissues: 25-hydroxycholesterol is an intermediate in biosynthesis of 7-alpha,25-dihydroxycholesterol (7-alpha,25-OHC), an oxysterol that acts as a ligand for the G protein-coupled receptor GPR183/EBI2, a chemotactic receptor for a number of lymphoid cells. May play an important role in regulating lipid metabolism by synthesizing a corepressor that blocks sterol regulatory element binding protein (SREBP) processing. In testis, production of 25-hydroxycholesterol by macrophages may play a role in Leydig cell differentiation. Required to restrain inflammation in macrophages: production of 25-hydroxycholesterol protects macrophages from cholesterol overload, thereby preventing mitochondrial DNA release and subsequent activation of the AIM2 inflammasome. Interferon-stimulated gene which has broad antiviral activities against a wide range of enveloped viruses. In Mus musculus (Mouse), this protein is Cholesterol 25-hydroxylase.